The following is a 235-amino-acid chain: Sugar fermentation stimulation protein homolog (235 aa).

Belongs to the SfsA family.

In Pseudomonas aeruginosa (strain LESB58), this protein is Sugar fermentation stimulation protein homolog.